A 128-amino-acid chain; its full sequence is DNA-directed RNA polymerase subunit omega (128 aa).

The disordered stretch occupies residues 87–106; it reads ARSSQAAPKSAPGQEIGKSF.

Belongs to the RNA polymerase subunit omega family. As to quaternary structure, the RNAP catalytic core consists of 2 alpha, 1 beta, 1 beta' and 1 omega subunit. When a sigma factor is associated with the core the holoenzyme is formed, which can initiate transcription.

It catalyses the reaction RNA(n) + a ribonucleoside 5'-triphosphate = RNA(n+1) + diphosphate. Functionally, promotes RNA polymerase assembly. Latches the N- and C-terminal regions of the beta' subunit thereby facilitating its interaction with the beta and alpha subunits. This is DNA-directed RNA polymerase subunit omega from Anaplasma marginale (strain Florida).